A 302-amino-acid polypeptide reads, in one-letter code: MANNNNIPHDSISDPSPTDDFFEQILGLSNFSGSSGSGLSGIGGVGPPPMMLQLGSGNEGNHNHMGAIGGGGPVGFHNQMFPLGLSLDQGKGHGFLKPDETGKRFQDDVLDNRCSSMKPIFHGQPMSQPAPPMPHQQSTIRPRVRARRGQATDPHSIAERLRRERIAERIRSLQELVPTVNKTDRAAMIDEIVDYVKFLRLQVKVLSMSRLGGAGAVAPLVTEMPLSSSVEDETQAVWEKWSNDGTERQVAKLMEENVGAAMQLLQSKALCIMPISLAMAIYHSQPPDTSSSIVKPEMNPPP.

The interval 124-154 is disordered; that stretch reads QPMSQPAPPMPHQQSTIRPRVRARRGQATDP. In terms of domain architecture, bHLH spans 150 to 199; the sequence is QATDPHSIAERLRRERIAERIRSLQELVPTVNKTDRAAMIDEIVDYVKFL.

Homodimer. Expressed constitutively in roots, leaves, stems and flowers.

It localises to the nucleus. This is Transcription factor bHLH7 (BHLH7) from Arabidopsis thaliana (Mouse-ear cress).